Here is a 543-residue protein sequence, read N- to C-terminus: Putative inorganic phosphate export protein YjbB (543 aa).

The next 9 helical transmembrane spans lie at 1–21, 48–68, 76–96, 99–119, 134–154, 175–195, 196–216, 240–260, and 274–294; these read MLTL…THIV, FCAG…TMLV, LVAL…TALM, ILTF…VIFF, GIGL…VTPI, ALIG…VLLT, ATLT…VIGA, LGSL…VHLL, and LVIY…LPFV.

Belongs to the YjbB family.

It localises to the cell inner membrane. The catalysed reaction is phosphate(in) = phosphate(out). Functionally, might be involved in phosphate export. Overproduction of YjbB reduces the elevated levels of polyphosphate (polyP) in a phoU mutant that accumulates 1000-fold higher levels of polyP than the wild type, suggesting that YjbB exports excess intracellular phosphate (Pi) in the phoU mutant and thus reduces the levels of polyP. This is Putative inorganic phosphate export protein YjbB (yjbB) from Escherichia coli (strain K12).